A 308-amino-acid polypeptide reads, in one-letter code: uncharacterized protein (308 aa).

The chain crosses the membrane as a helical span at residues 191-211; the sequence is YLCLNLPYIIVALTLVPYSLV.

It is found in the host membrane. This is an uncharacterized protein from Saccharolobus islandicus (Sulfolobus islandicus).